A 662-amino-acid polypeptide reads, in one-letter code: Primary amine oxidase 2 (662 aa).

A signal peptide spans 1–22; the sequence is MSQLLLFTILVFSSVFVIGSLS. A glycan (N-linked (GlcNAc...) asparagine) is linked at asparagine 154. 321–332 is a binding site for substrate; it reads FFDCGEFGCGQY. Residue aspartate 323 is the Proton acceptor of the active site. Cysteine 342 and cysteine 368 are oxidised to a cystine. 405 to 410 provides a ligand contact to substrate; the sequence is VGNYDY. Tyrosine 408 acts as the Schiff-base intermediate with substrate; via topaquinone in catalysis. Tyrosine 408 bears the 2',4',5'-topaquinone mark. Positions 464 and 466 each coordinate Cu cation. Residues aspartate 473 and aspartate 475 each contribute to the Mn(2+) site. A glycan (N-linked (GlcNAc...) asparagine) is linked at asparagine 568. Mn(2+) contacts are provided by aspartate 602 and isoleucine 603. Histidine 613 provides a ligand contact to Cu cation.

This sequence belongs to the copper/topaquinone oxidase family. As to quaternary structure, homodimer. Cu cation serves as cofactor. Mn(2+) is required as a cofactor. It depends on L-topaquinone as a cofactor. Topaquinone (TPQ) is generated by copper-dependent autoxidation of a specific tyrosyl residue.

It catalyses the reaction a primary methyl amine + O2 + H2O = an aldehyde + H2O2 + NH4(+). This chain is Primary amine oxidase 2, found in Arabidopsis thaliana (Mouse-ear cress).